The following is a 620-amino-acid chain: 1-deoxy-D-xylulose-5-phosphate synthase (620 aa).

Residues His-80 and 121–123 (GHS) each bind thiamine diphosphate. Residue Asp-152 coordinates Mg(2+). Thiamine diphosphate is bound by residues 153 to 154 (GA), Asn-181, Tyr-288, and Glu-370. Residue Asn-181 coordinates Mg(2+).

This sequence belongs to the transketolase family. DXPS subfamily. Homodimer. It depends on Mg(2+) as a cofactor. Requires thiamine diphosphate as cofactor.

The catalysed reaction is D-glyceraldehyde 3-phosphate + pyruvate + H(+) = 1-deoxy-D-xylulose 5-phosphate + CO2. It functions in the pathway metabolic intermediate biosynthesis; 1-deoxy-D-xylulose 5-phosphate biosynthesis; 1-deoxy-D-xylulose 5-phosphate from D-glyceraldehyde 3-phosphate and pyruvate: step 1/1. Catalyzes the acyloin condensation reaction between C atoms 2 and 3 of pyruvate and glyceraldehyde 3-phosphate to yield 1-deoxy-D-xylulose-5-phosphate (DXP). This chain is 1-deoxy-D-xylulose-5-phosphate synthase, found in Salmonella arizonae (strain ATCC BAA-731 / CDC346-86 / RSK2980).